The following is a 391-amino-acid chain: Protein CapJ (391 aa).

Its pathway is capsule biogenesis; capsule polysaccharide biosynthesis. Its function is as follows. Required for the biosynthesis of type 1 capsular polysaccharide. The protein is Protein CapJ (capJ) of Staphylococcus aureus.